The following is a 105-amino-acid chain: N(4)-acetylcytidine amidohydrolase (105 aa).

Positions 7 to 93 (TFFERFEHDI…VIAEIYPGLE (87 aa)) constitute an ASCH domain. Catalysis depends on K21, which acts as the Proton acceptor. Catalysis depends on T24, which acts as the Nucleophile. E74 serves as the catalytic Proton donor.

This sequence belongs to the N(4)-acetylcytidine amidohydrolase family.

It carries out the reaction N(4)-acetylcytidine + H2O = cytidine + acetate + H(+). The catalysed reaction is N(4)-acetyl-2'-deoxycytidine + H2O = 2'-deoxycytidine + acetate + H(+). It catalyses the reaction N(4)-acetylcytosine + H2O = cytosine + acetate + H(+). Functionally, catalyzes the hydrolysis of N(4)-acetylcytidine (ac4C). The polypeptide is N(4)-acetylcytidine amidohydrolase (Shewanella baltica (strain OS195)).